The primary structure comprises 352 residues: DNA polymerase IV (352 aa).

The 182-residue stretch at isoleucine 4–glycine 185 folds into the UmuC domain. 2 residues coordinate Mg(2+): aspartate 8 and aspartate 103. Residue glutamate 104 is part of the active site.

The protein belongs to the DNA polymerase type-Y family. In terms of assembly, monomer. Mg(2+) serves as cofactor.

The protein localises to the cytoplasm. It carries out the reaction DNA(n) + a 2'-deoxyribonucleoside 5'-triphosphate = DNA(n+1) + diphosphate. Functionally, poorly processive, error-prone DNA polymerase involved in untargeted mutagenesis. Copies undamaged DNA at stalled replication forks, which arise in vivo from mismatched or misaligned primer ends. These misaligned primers can be extended by PolIV. Exhibits no 3'-5' exonuclease (proofreading) activity. May be involved in translesional synthesis, in conjunction with the beta clamp from PolIII. This Pectobacterium atrosepticum (strain SCRI 1043 / ATCC BAA-672) (Erwinia carotovora subsp. atroseptica) protein is DNA polymerase IV.